A 198-amino-acid chain; its full sequence is Probable thymidylate kinase (198 aa).

7-14 (GIDGAGKS) is an ATP binding site.

Belongs to the thymidylate kinase family.

It carries out the reaction dTMP + ATP = dTDP + ADP. The sequence is that of Probable thymidylate kinase from Methanocorpusculum labreanum (strain ATCC 43576 / DSM 4855 / Z).